The primary structure comprises 375 residues: 4,4'-diaponeurosporenoate glycosyltransferase (375 aa).

4 consecutive transmembrane segments (helical) span residues 3 to 23 (WLSRILTVIVTMSMACGALIF), 164 to 184 (FYEGFSAIFNLMTVVGMNVFS), 277 to 297 (IMTAIVLWLFGSIASILGLCL), and 330 to 350 (FSNLLMVCHPLLFMFFTKIFI).

This sequence belongs to the glycosyltransferase 2 family. CrtQ subfamily.

The protein localises to the cell membrane. It functions in the pathway carotenoid biosynthesis; staphyloxanthin biosynthesis; staphyloxanthin from farnesyl diphosphate: step 4/5. In terms of biological role, catalyzes the glycosylation of 4,4'-diaponeurosporenoate, i.e. the esterification of glucose at the C1'' position with the carboxyl group of 4,4'-diaponeurosporenic acid, to form glycosyl-4,4'-diaponeurosporenoate. This is a step in the biosynthesis of staphyloxanthin, an orange pigment present in most staphylococci strains. The chain is 4,4'-diaponeurosporenoate glycosyltransferase (crtQ) from Staphylococcus aureus (strain USA300).